The chain runs to 259 residues: Polycomb group RING finger protein 1 (259 aa).

The residue at position 2 (Ala2) is an N-acetylalanine. At Ser3 the chain carries Phosphoserine. Lys24 is covalently cross-linked (Glycyl lysine isopeptide (Lys-Gly) (interchain with G-Cter in SUMO2)). Residues 47 to 86 form an RING-type zinc finger; that stretch reads CCLCAGYFVDATTITECLHTFCKSCIVKYLQTSKYCPMCN. A necessary for repressor activity region spans residues 86–247; sequence NIKIHETQPL…LSRWFGKPSP (162 aa). Residue Lys88 forms a Glycyl lysine isopeptide (Lys-Gly) (interchain with G-Cter in SUMO2) linkage. The segment at 150 to 255 is required for the interaction with the KDM2B-SKP1 heterodimeric complex; the sequence is LPFSSFDHSK…SPLLLQYSVK (106 aa). The tract at residues 167 to 255 is RING-finger and WD40-associated ubiquitin-like domain (RAWUL); sufficient for interaction with BCOR and BCORL1; it reads EQLSLCLERL…SPLLLQYSVK (89 aa).

Interacts with BCORL1, forming heterodimers. The PCGF1-BCORL1 heterodimeric complex interacts with the KDM2B-SKP1 heterodimeric complex to form a homotetrameric polycomb repression complex 1 (PRC1.1). Component of the repressive BCOR complex containing a Polycomb group subcomplex at least composed of RYBP, RING1 and RNF2/RING2. Specifically interacts with BCOR, RING1 and RNF2/RING2. Component of a PRC1-like complex. Interacts with CBX6, CBX7 and CBX8. Interacts with DPPA4, NANOG, POU5F1 and RYBP.

The protein localises to the nucleus. Its function is as follows. Component of the Polycomb group (PcG) multiprotein BCOR complex, a complex required to maintain the transcriptionally repressive state of some genes, such as BCL6 and the cyclin-dependent kinase inhibitor, CDKN1A. Transcriptional repressor that may be targeted to the DNA by BCL6; this transcription repressor activity may be related to PKC signaling pathway. Represses CDKN1A expression by binding to its promoter, and this repression is dependent on the retinoic acid response element (RARE element). Promotes cell cycle progression and enhances cell proliferation as well. May have a positive role in tumor cell growth by down-regulating CDKN1A. Component of a Polycomb group (PcG) multiprotein PRC1-like complex, a complex class required to maintain the transcriptionally repressive state of many genes, including Hox genes, throughout development. PcG PRC1 complex acts via chromatin remodeling and modification of histones; it mediates monoubiquitination of histone H2A 'Lys-119', rendering chromatin heritably changed in its expressibility. Within the PRC1-like complex, regulates RNF2 ubiquitin ligase activity. Regulates the expression of DPPA4 and NANOG in the NT2 embryonic carcinoma cells. The polypeptide is Polycomb group RING finger protein 1 (Pcgf1) (Mus musculus (Mouse)).